A 244-amino-acid polypeptide reads, in one-letter code: MSGHSFFEHLFEHSQHVTPYLHGAIKPRPERCAEHGFIHIEHASSDHIRALYESLKLAHPEAGAAYWLTRTWTLLCWQPLYVAFIAIYSCQGLPKLSSMGQHVQPRFVSGYQFDDDEYRQGSEQELIAHAGKELCALFDYFRQEMSLWTRIRPGFTQHLFADGVFGCLVKLSQFYPTLSGDYFLEQARLWLAACQLPEKLIQSLRYDETSRQLSLVRTSCCLVYKCQGRELCRDCPRHPDNKRE.

[2Fe-2S] cluster is bound by residues Cys-220, Cys-221, Cys-232, and Cys-235.

Monomer. [2Fe-2S] cluster is required as a cofactor.

It is found in the cytoplasm. It catalyses the reaction 2 a Fe(II)-siderophore + NAD(+) + H(+) = 2 a Fe(III)-siderophore + NADH. The catalysed reaction is 2 a Fe(II)-siderophore + NADP(+) + H(+) = 2 a Fe(III)-siderophore + NADPH. Functionally, ferric-siderophore reductase involved in iron removal from the siderophores after their transport into the cell. Acts as a major ferric-aerobactin reductase catalyzing the reduction of Fe(3+)-aerobactin, a citrate-hydroxamate siderophore produced by other bacteria. Catalyzes reduction of Fe(3+)-vulnibactin, a catecholate siderophore synthesized by V.vulnificus, in the absence of VuuB. Catalyzes reduction of ferrioxamine B and Fe(3+)-vibriobactin in vitro. No activity with Fe(3+)-enterobactin. Catalyzes reduction of ferric chelating compound Fe(3+)-nitrilotriacetic acid (NTA) in the presence of NADH, NADPH or reduced glutathione (GSH) as its electron donor in vitro. Also catalyzes reduction of ferric chelating compounds Fe(3+)-citrate and Fe(3+)-EDTA as well as non-complexed FeCl3 in the presence of GSH as its electron donor in vitro. Highest activity with Fe(3+)-NTA as electron acceptor and GSH as donor. The polypeptide is Ferric aerobactin reductase IutB (Vibrio vulnificus).